The chain runs to 463 residues: Vicilin (463 aa).

A signal peptide spans M1–S27. Positions P35–E194 constitute a Cupin type-1 1 domain. Residues L235–R257 are disordered. A compositionally biased stretch (low complexity) spans N238–E252. A Cupin type-1 2 domain is found at F254–D426.

This sequence belongs to the 7S seed storage protein family.

The protein resides in the vacuole. It localises to the aleurone grain. Its function is as follows. Seed storage protein. The chain is Vicilin from Vicia faba (Broad bean).